A 390-amino-acid chain; its full sequence is Zinc finger CCCH domain-containing protein 46 (390 aa).

A C3H1-type zinc finger spans residues 2–29 (SRRQEICRNFQRGSCKYGAQCRYLHASP). Positions 27–129 (ASPHQQQQQQ…AAHTSCEDPQ (103 aa)) are disordered. Over residues 48-76 (GSRQQQQPSFGSQFQQQQQQQQKPNPFGF) the composition is skewed to low complexity. The segment covering 106–129 (PTKQTEAVQPPQAQAAHTSCEDPQ) has biased composition (polar residues). Residues 146 to 211 (WKLTCYAHLR…FTNLLNSARP (66 aa)) form a required for transcriptional activation activity region. A compositionally biased stretch (polar residues) spans 230 to 248 (SSFGASQTNGPPVFSSFSQ). Positions 230 to 284 (SSFGASQTNGPPVFSSFSQIGAATNIGPGPGTTAPGMPASSPFGHPSSAPLAAPT) are disordered. Residues 250 to 268 (GAATNIGPGPGTTAPGMPA) are compositionally biased toward low complexity.

In terms of assembly, interacts with GSK1 and GSK4. In terms of processing, phosphorylated on serine and threonine residues by GSK1. Phosphorylation represses nuclear localization. Expressed in the adaxial face of the collar, nodes and the basal region of elongating internodes.

It is found in the nucleus. Its subcellular location is the cytoplasm. In terms of biological role, transcriptional activator that binds double-stranded DNA and the single-stranded RNA polymers poly(rA), poly(rU) and poly(rG), but not poly(rC). Mediates optimal plant architecture through brassinosteroid (BR) signaling. May act as a negative regulator in sterol homeostasis. Acts as a negative regulator of BR signaling. Binds to the specific DNA sequence 5'-CTCGC-3' of BZR1 promoter and negatively regulates BZR1. Acts as an antagonistic transcription factor of BZR1 to attenuate the BR signaling pathway and regulate leaf bending. Represses the expression of ILI1, and activates that of IBH1 to balance the regulation activity of BZR1. This Oryza sativa subsp. japonica (Rice) protein is Zinc finger CCCH domain-containing protein 46.